We begin with the raw amino-acid sequence, 1407 residues long: DNA-directed RNA polymerase subunit beta' (1407 aa).

Zn(2+)-binding residues include Cys70, Cys72, Cys85, and Cys88. Residues Asp460, Asp462, and Asp464 each coordinate Mg(2+). Positions 814, 888, 895, and 898 each coordinate Zn(2+).

This sequence belongs to the RNA polymerase beta' chain family. In terms of assembly, the RNAP catalytic core consists of 2 alpha, 1 beta, 1 beta' and 1 omega subunit. When a sigma factor is associated with the core the holoenzyme is formed, which can initiate transcription. Mg(2+) serves as cofactor. The cofactor is Zn(2+).

It catalyses the reaction RNA(n) + a ribonucleoside 5'-triphosphate = RNA(n+1) + diphosphate. In terms of biological role, DNA-dependent RNA polymerase catalyzes the transcription of DNA into RNA using the four ribonucleoside triphosphates as substrates. The protein is DNA-directed RNA polymerase subunit beta' of Salmonella choleraesuis (strain SC-B67).